Reading from the N-terminus, the 121-residue chain is Small ribosomal subunit protein uS11 (121 aa).

This sequence belongs to the universal ribosomal protein uS11 family. Part of the 30S ribosomal subunit. Interacts with proteins S7 and S18. Binds to IF-3.

Functionally, located on the platform of the 30S subunit, it bridges several disparate RNA helices of the 16S rRNA. Forms part of the Shine-Dalgarno cleft in the 70S ribosome. This chain is Small ribosomal subunit protein uS11, found in Mycoplasma genitalium (strain ATCC 33530 / DSM 19775 / NCTC 10195 / G37) (Mycoplasmoides genitalium).